The following is a 406-amino-acid chain: MALSVPPIAGAIIGYFTNDLAITMLFRPYKPIKIGQRTLPFTPGLIPANQERLARRISDAIMGSLLTPEELQKLTRRLLQTERVQAAIQWLLKMALDQVQSETEQKSAQVLAHILHDLLGSAIPRLIRVWARREDFLEAQLNQIFDQVLLELKLSEEQAGRIADWLLQVVLPPDRLRQTLIDFLTDRNIQVIDEDLREKTSGTYWVVANLFGVRNTLIRLRDFCIEEREACNVRLAELMDALGVRQRLIEGLQDLSLQNLPVATVRQLRKVFRQNVRIYIQSQGLELVKGLSDSLNWEHVSLSILNRLRSSTAVTASLEVVSQELALVLERYLERDLEIIVEKAIPILNLDEVIVERVKATTPQELEAAIQGIVKSELQAIVTLGGVLGLLIGIAQSVLLLVQGGL.

Residues 381-401 form a helical membrane-spanning segment; that stretch reads IVTLGGVLGLLIGIAQSVLLL.

It belongs to the UPF0754 family.

It localises to the cell inner membrane. The polypeptide is UPF0754 membrane protein Cyan7425_4067 (Cyanothece sp. (strain PCC 7425 / ATCC 29141)).